The primary structure comprises 158 residues: MADVVEVLVPGGKANPGPPLGPALGPLGINIKKVVDEINNKTKDYNGMTVPVKVIVDASRNFTVEVGTPPTSALVLSELKLEKGSGTPNTNFIGSLTIEQAIKVAQMKRDAMLSYTLKNAVKEVAGTCVSLGVMIEGKKPKEFIAEVNAGKYDDKLSE.

This sequence belongs to the universal ribosomal protein uL11 family. Part of the ribosomal stalk of the 50S ribosomal subunit. Interacts with L10 and the large rRNA to form the base of the stalk. L10 forms an elongated spine to which L12 dimers bind in a sequential fashion forming a multimeric L10(L12)X complex.

In terms of biological role, forms part of the ribosomal stalk which helps the ribosome interact with GTP-bound translation factors. In Methanocella arvoryzae (strain DSM 22066 / NBRC 105507 / MRE50), this protein is Large ribosomal subunit protein uL11.